We begin with the raw amino-acid sequence, 131 residues long: Large ribosomal subunit protein bL17 (131 aa).

It belongs to the bacterial ribosomal protein bL17 family. In terms of assembly, part of the 50S ribosomal subunit. Contacts protein L32.

The polypeptide is Large ribosomal subunit protein bL17 (Cupriavidus pinatubonensis (strain JMP 134 / LMG 1197) (Cupriavidus necator (strain JMP 134))).